The sequence spans 231 residues: 7-cyano-7-deazaguanine synthase (231 aa).

8-18 (LSGGLDSATAA) serves as a coordination point for ATP. Zn(2+) is bound by residues cysteine 189, cysteine 197, cysteine 200, and cysteine 203.

Belongs to the QueC family. It depends on Zn(2+) as a cofactor.

It catalyses the reaction 7-carboxy-7-deazaguanine + NH4(+) + ATP = 7-cyano-7-deazaguanine + ADP + phosphate + H2O + H(+). Its pathway is purine metabolism; 7-cyano-7-deazaguanine biosynthesis. Functionally, catalyzes the ATP-dependent conversion of 7-carboxy-7-deazaguanine (CDG) to 7-cyano-7-deazaguanine (preQ(0)). This chain is 7-cyano-7-deazaguanine synthase, found in Synechococcus elongatus (strain ATCC 33912 / PCC 7942 / FACHB-805) (Anacystis nidulans R2).